We begin with the raw amino-acid sequence, 267 residues long: uncharacterized protein (267 aa).

This is an uncharacterized protein from Saccharomyces cerevisiae (strain ATCC 204508 / S288c) (Baker's yeast).